A 324-amino-acid chain; its full sequence is MIFSKISQVAHYVPQQLVTNNDLASIMDTSHEWIFSRTGIAERHISRDEMTSDLAIQVADQLLTQSGLKADAIDFIIVATISPDATMPSTAAKVQAAIAATSAFAFDMTAACSGFVFALAMADKLIASGAYQNGMVIGAETLSKLVNWQDRATAVLFGDGAGGVLLEASKDKHVLAETLHTDGARCQSLISGETSLSSPYSIGKKAIATIQMDGRAIFDFAIRDVSKSILTLMAQSDITKDDIDYCLLHQANRRILDKIARKIDVPREKFLENMMRYGNTSAASIPILLSEAVQKGQIRLDGTQKILLSGFGGGLTWGSLIVKI.

Active-site residues include C112 and H249. An ACP-binding region spans residues 250 to 254 (QANRR). N279 is an active-site residue.

The protein belongs to the thiolase-like superfamily. FabH family. As to quaternary structure, homodimer.

Its subcellular location is the cytoplasm. It catalyses the reaction malonyl-[ACP] + acetyl-CoA + H(+) = 3-oxobutanoyl-[ACP] + CO2 + CoA. The protein operates within lipid metabolism; fatty acid biosynthesis. Its function is as follows. Catalyzes the condensation reaction of fatty acid synthesis by the addition to an acyl acceptor of two carbons from malonyl-ACP. Catalyzes the first condensation reaction which initiates fatty acid synthesis and may therefore play a role in governing the total rate of fatty acid production. Possesses both acetoacetyl-ACP synthase and acetyl transacylase activities. Its substrate specificity determines the biosynthesis of branched-chain and/or straight-chain of fatty acids. The protein is Beta-ketoacyl-[acyl-carrier-protein] synthase III of Streptococcus pyogenes serotype M3 (strain ATCC BAA-595 / MGAS315).